The primary structure comprises 1454 residues: Coiled-coil domain-containing protein 18 (1454 aa).

Position 45 is a phosphoserine (serine 45). Coiled coils occupy residues 107-138 (APVDQEIKSLREKLNKLRQQNACLVTQNHSLM), 170-402 (ILEE…ISQL), 438-464 (KLVISELRIKLAIKEAEIQKLHANLTA), and 508-1309 (TMNK…SGHE). The segment at 828 to 851 (QKQRESSAEKLRKMEEKCESAAHE) is disordered. Position 1355 is a phosphoserine (serine 1355).

It is found in the cytoplasm. Its subcellular location is the cytoskeleton. The protein localises to the microtubule organizing center. It localises to the centrosome. The protein resides in the centriolar satellite. This Homo sapiens (Human) protein is Coiled-coil domain-containing protein 18 (CCDC18).